A 180-amino-acid polypeptide reads, in one-letter code: Shikimate kinase (180 aa).

An ATP-binding site is contributed by 15 to 20; that stretch reads GAGKTT. Thr19 lines the Mg(2+) pocket. 3 residues coordinate substrate: Asp37, Arg61, and Gly83. Arg121 is a binding site for ATP. Arg140 is a substrate binding site.

This sequence belongs to the shikimate kinase family. As to quaternary structure, monomer. Mg(2+) is required as a cofactor.

It is found in the cytoplasm. It catalyses the reaction shikimate + ATP = 3-phosphoshikimate + ADP + H(+). Its pathway is metabolic intermediate biosynthesis; chorismate biosynthesis; chorismate from D-erythrose 4-phosphate and phosphoenolpyruvate: step 5/7. Functionally, catalyzes the specific phosphorylation of the 3-hydroxyl group of shikimic acid using ATP as a cosubstrate. This Psychrobacter sp. (strain PRwf-1) protein is Shikimate kinase.